We begin with the raw amino-acid sequence, 139 residues long: Putative pre-16S rRNA nuclease (139 aa).

The protein belongs to the YqgF nuclease family.

It is found in the cytoplasm. Functionally, could be a nuclease involved in processing of the 5'-end of pre-16S rRNA. The protein is Putative pre-16S rRNA nuclease of Streptococcus equi subsp. equi (strain 4047).